The chain runs to 600 residues: MVNNMTDLTAQDAAWSTRDHLDDPVIGELRNRFGPDAFTVQATRTGIPVVWVKREQLLEVGDFLKKLPKPYVMLFDLHGMDERLRTHRDGLPAADFSVFYHLISIERNRDIMLKVALSENDLRVPTFTKLFPNANWYERETWEMFGIDIEGHPHLTRIMMPQTWEGHPLRKDYPARATEFDPFELTKAKQDLEMEALTFKPEDWGMKRGTDNEDFMFLNLGPNHPSAHGAFRIILQLDGEEIVDCVPDIGYHHRGAEKMGERQSWHSYIPYTDRIEYLGGCVNEMPYVLAVEKLAGITVSDRVNVIRVMLSELFRINSHLLYISTFIQDVGAMTPVFFAFTDRQKIYDLVEAITGFRMHPAWFRIGGVAHDLPRGWDRLLREFLEWMPKRLDSYEKAALRNTILKGRSQGVAAYGAKEALEWGTTGAGLRATGIDFDVRKWRPYSGYENFDFEVPVGGGVSDCYTRVMLKVEELRQSLRILQQCLDNMPEGPFKADHPLTTPPPKERTLQHIETLITHFLQVSWGPVMPAQESFQMVEATKGINSYYLTSDGSTMSYRTRVRTPSFAHLQQIPSAIRGSLVSDLIVYLGSIDFVMSDVDR.

The interval 1 to 190 is NADH dehydrogenase I subunit C; the sequence is MVNNMTDLTA…DPFELTKAKQ (190 aa). The NADH dehydrogenase I subunit D stretch occupies residues 214–600; it reads DFMFLNLGPN…IDFVMSDVDR (387 aa).

It in the N-terminal section; belongs to the complex I 30 kDa subunit family. In the C-terminal section; belongs to the complex I 49 kDa subunit family. As to quaternary structure, NDH-1 is composed of 13 different subunits. Subunits NuoB, CD, E, F, and G constitute the peripheral sector of the complex.

The protein resides in the cell inner membrane. It catalyses the reaction a quinone + NADH + 5 H(+)(in) = a quinol + NAD(+) + 4 H(+)(out). NDH-1 shuttles electrons from NADH, via FMN and iron-sulfur (Fe-S) centers, to quinones in the respiratory chain. The immediate electron acceptor for the enzyme in this species is believed to be ubiquinone. Couples the redox reaction to proton translocation (for every two electrons transferred, four hydrogen ions are translocated across the cytoplasmic membrane), and thus conserves the redox energy in a proton gradient. The sequence is that of NADH-quinone oxidoreductase subunit C/D from Salmonella paratyphi C (strain RKS4594).